The following is a 191-amino-acid chain: dCTP deaminase (191 aa).

DCTP contacts are provided by residues 112–117 (KSTYAR), 136–138 (TLE), Gln157, Tyr173, and Gln183. The active-site Proton donor/acceptor is the Glu138.

The protein belongs to the dCTP deaminase family. Homotrimer.

The catalysed reaction is dCTP + H2O + H(+) = dUTP + NH4(+). It participates in pyrimidine metabolism; dUMP biosynthesis; dUMP from dCTP (dUTP route): step 1/2. Functionally, catalyzes the deamination of dCTP to dUTP. The sequence is that of dCTP deaminase from Psychrobacter cryohalolentis (strain ATCC BAA-1226 / DSM 17306 / VKM B-2378 / K5).